A 203-amino-acid chain; its full sequence is Ribosome maturation factor RimP (203 aa).

A compositionally biased stretch (polar residues) spans 1–21; that stretch reads MSDSEATTSTDRSESNSTATI. The disordered stretch occupies residues 1 to 23; sequence MSDSEATTSTDRSESNSTATIHN.

Belongs to the RimP family.

It localises to the cytoplasm. In terms of biological role, required for maturation of 30S ribosomal subunits. In Paenarthrobacter aurescens (strain TC1), this protein is Ribosome maturation factor RimP.